Here is a 254-residue protein sequence, read N- to C-terminus: Triosephosphate isomerase (254 aa).

Position 10-12 (10-12) interacts with substrate; that stretch reads NWK. The active-site Electrophile is H99. The active-site Proton acceptor is E169. Substrate contacts are provided by residues G175, S215, and 236–237; that span reads GG.

It belongs to the triosephosphate isomerase family. As to quaternary structure, homodimer.

Its subcellular location is the cytoplasm. It catalyses the reaction D-glyceraldehyde 3-phosphate = dihydroxyacetone phosphate. Its pathway is carbohydrate biosynthesis; gluconeogenesis. The protein operates within carbohydrate degradation; glycolysis; D-glyceraldehyde 3-phosphate from glycerone phosphate: step 1/1. Its function is as follows. Involved in the gluconeogenesis. Catalyzes stereospecifically the conversion of dihydroxyacetone phosphate (DHAP) to D-glyceraldehyde-3-phosphate (G3P). The protein is Triosephosphate isomerase of Chlamydia caviae (strain ATCC VR-813 / DSM 19441 / 03DC25 / GPIC) (Chlamydophila caviae).